We begin with the raw amino-acid sequence, 346 residues long: Uroporphyrinogen decarboxylase (346 aa).

Substrate-binding positions include 26-30, aspartate 76, tyrosine 153, serine 208, and histidine 323; that span reads RQAGR.

Belongs to the uroporphyrinogen decarboxylase family. In terms of assembly, homodimer.

It localises to the cytoplasm. It carries out the reaction uroporphyrinogen III + 4 H(+) = coproporphyrinogen III + 4 CO2. Its pathway is porphyrin-containing compound metabolism; protoporphyrin-IX biosynthesis; coproporphyrinogen-III from 5-aminolevulinate: step 4/4. Its function is as follows. Catalyzes the decarboxylation of four acetate groups of uroporphyrinogen-III to yield coproporphyrinogen-III. The polypeptide is Uroporphyrinogen decarboxylase (Prochlorococcus marinus (strain AS9601)).